The following is a 126-amino-acid chain: UPF0538 protein C2orf76 homolog (126 aa).

It belongs to the UPF0538 family.

This is UPF0538 protein C2orf76 homolog from Pongo abelii (Sumatran orangutan).